We begin with the raw amino-acid sequence, 253 residues long: 5'/3'-nucleotidase SurE (253 aa).

Positions 8, 9, 39, and 92 each coordinate a divalent metal cation.

Belongs to the SurE nucleotidase family. A divalent metal cation serves as cofactor.

It localises to the cytoplasm. It catalyses the reaction a ribonucleoside 5'-phosphate + H2O = a ribonucleoside + phosphate. The enzyme catalyses a ribonucleoside 3'-phosphate + H2O = a ribonucleoside + phosphate. The catalysed reaction is [phosphate](n) + H2O = [phosphate](n-1) + phosphate + H(+). Its function is as follows. Nucleotidase with a broad substrate specificity as it can dephosphorylate various ribo- and deoxyribonucleoside 5'-monophosphates and ribonucleoside 3'-monophosphates with highest affinity to 3'-AMP. Also hydrolyzes polyphosphate (exopolyphosphatase activity) with the preference for short-chain-length substrates (P20-25). Might be involved in the regulation of dNTP and NTP pools, and in the turnover of 3'-mononucleotides produced by numerous intracellular RNases (T1, T2, and F) during the degradation of various RNAs. The polypeptide is 5'/3'-nucleotidase SurE (Salmonella paratyphi B (strain ATCC BAA-1250 / SPB7)).